Here is a 339-residue protein sequence, read N- to C-terminus: Dihydroorotase (339 aa).

Zn(2+) is bound by residues His-12 and His-14. Residues 14-16 (HVR) and Asn-40 each bind substrate. Lys-94, His-133, His-167, and Asp-239 together coordinate Zn(2+). N6-carboxylysine is present on Lys-94. A substrate-binding site is contributed by His-133. Asp-239 is a catalytic residue. Residues His-243 and Ala-255 each contribute to the substrate site.

The protein belongs to the metallo-dependent hydrolases superfamily. DHOase family. Class II DHOase subfamily. As to quaternary structure, homodimer. Requires Zn(2+) as cofactor.

The enzyme catalyses (S)-dihydroorotate + H2O = N-carbamoyl-L-aspartate + H(+). It functions in the pathway pyrimidine metabolism; UMP biosynthesis via de novo pathway; (S)-dihydroorotate from bicarbonate: step 3/3. In terms of biological role, catalyzes the reversible cyclization of carbamoyl aspartate to dihydroorotate. The chain is Dihydroorotase from Helicobacter pylori (strain G27).